Reading from the N-terminus, the 463-residue chain is L-2-hydroxyglutarate dehydrogenase, mitochondrial (463 aa).

A mitochondrion-targeting transit peptide spans 1–51 (MVPALRYLVGACGRARGLFAGGSPGACGFASGRPRPLCGGSRSASTSSFDI). 3 positions are modified to N6-acetyllysine: Lys104, Lys155, and Lys173.

The protein belongs to the L2HGDH family. FAD is required as a cofactor. Widely expressed. Highly expressed in brain, testis and muscle. Expressed to a lower extent in lymphocytes, fibroblasts, keratinocytes, placenta, bladder, small intestine, liver and bone marrow.

The protein resides in the mitochondrion. The enzyme catalyses (S)-2-hydroxyglutarate + A = 2-oxoglutarate + AH2. The protein is L-2-hydroxyglutarate dehydrogenase, mitochondrial (L2HGDH) of Homo sapiens (Human).